Reading from the N-terminus, the 124-residue chain is Large ribosomal subunit protein bL12 (124 aa).

Belongs to the bacterial ribosomal protein bL12 family. Homodimer. Part of the ribosomal stalk of the 50S ribosomal subunit. Forms a multimeric L10(L12)X complex, where L10 forms an elongated spine to which 2 to 4 L12 dimers bind in a sequential fashion. Binds GTP-bound translation factors.

Its function is as follows. Forms part of the ribosomal stalk which helps the ribosome interact with GTP-bound translation factors. Is thus essential for accurate translation. In Cupriavidus necator (strain ATCC 17699 / DSM 428 / KCTC 22496 / NCIMB 10442 / H16 / Stanier 337) (Ralstonia eutropha), this protein is Large ribosomal subunit protein bL12.